A 221-amino-acid polypeptide reads, in one-letter code: ATP phosphoribosyltransferase (221 aa).

Belongs to the ATP phosphoribosyltransferase family. Short subfamily. In terms of assembly, heteromultimer composed of HisG and HisZ subunits.

The protein localises to the cytoplasm. It catalyses the reaction 1-(5-phospho-beta-D-ribosyl)-ATP + diphosphate = 5-phospho-alpha-D-ribose 1-diphosphate + ATP. It participates in amino-acid biosynthesis; L-histidine biosynthesis; L-histidine from 5-phospho-alpha-D-ribose 1-diphosphate: step 1/9. Its function is as follows. Catalyzes the condensation of ATP and 5-phosphoribose 1-diphosphate to form N'-(5'-phosphoribosyl)-ATP (PR-ATP). Has a crucial role in the pathway because the rate of histidine biosynthesis seems to be controlled primarily by regulation of HisG enzymatic activity. This is ATP phosphoribosyltransferase from Neisseria gonorrhoeae (strain ATCC 700825 / FA 1090).